Here is a 161-residue protein sequence, read N- to C-terminus: ATP synthase subunit b 1 (161 aa).

A helical membrane pass occupies residues 5–25 (AETWVAVAFVLMVALFIYFGA).

This sequence belongs to the ATPase B chain family. As to quaternary structure, F-type ATPases have 2 components, F(1) - the catalytic core - and F(0) - the membrane proton channel. F(1) has five subunits: alpha(3), beta(3), gamma(1), delta(1), epsilon(1). F(0) has three main subunits: a(1), b(2) and c(10-14). The alpha and beta chains form an alternating ring which encloses part of the gamma chain. F(1) is attached to F(0) by a central stalk formed by the gamma and epsilon chains, while a peripheral stalk is formed by the delta and b chains.

It localises to the cell inner membrane. In terms of biological role, f(1)F(0) ATP synthase produces ATP from ADP in the presence of a proton or sodium gradient. F-type ATPases consist of two structural domains, F(1) containing the extramembraneous catalytic core and F(0) containing the membrane proton channel, linked together by a central stalk and a peripheral stalk. During catalysis, ATP synthesis in the catalytic domain of F(1) is coupled via a rotary mechanism of the central stalk subunits to proton translocation. Its function is as follows. Component of the F(0) channel, it forms part of the peripheral stalk, linking F(1) to F(0). This Afipia carboxidovorans (strain ATCC 49405 / DSM 1227 / KCTC 32145 / OM5) (Oligotropha carboxidovorans) protein is ATP synthase subunit b 1.